A 427-amino-acid chain; its full sequence is Glutamate-1-semialdehyde 2,1-aminomutase (427 aa).

Position 267 is an N6-(pyridoxal phosphate)lysine (K267).

The protein belongs to the class-III pyridoxal-phosphate-dependent aminotransferase family. HemL subfamily. In terms of assembly, homodimer. The cofactor is pyridoxal 5'-phosphate.

It localises to the cytoplasm. It carries out the reaction (S)-4-amino-5-oxopentanoate = 5-aminolevulinate. Its pathway is porphyrin-containing compound metabolism; protoporphyrin-IX biosynthesis; 5-aminolevulinate from L-glutamyl-tRNA(Glu): step 2/2. This chain is Glutamate-1-semialdehyde 2,1-aminomutase, found in Thermodesulfovibrio yellowstonii (strain ATCC 51303 / DSM 11347 / YP87).